The chain runs to 296 residues: MVIQWFPGHMAKARRQVTEKLKLIDVVIELVDARLPLSSRNPMIDEIITHKPRLVVLNKADMADDRLTKQWIAYFKEKGHMAISINAQAGQGMKEIAAACKVLVKEKFDKMVAKGIRPRAIRALIVGIPNVGKSTLINKLAKKNIAKTGDRPGVTTAQQWIKVGKEMELLDTPGILWPKFEDQLVGLRLATTGAIKDSILNLQDVAVYALRFMEKHYPERLKERYNLNEIPEDIVELFDAIGKNRGCLMGGGMIDYDKTSELVLRELRGGKLGKMTFETPEEFGEQVEDVEKIEEV.

The 165-residue stretch at 14–178 (RRQVTEKLKL…LLDTPGILWP (165 aa)) folds into the CP-type G domain. Residues 58 to 61 (NKAD), 130 to 135 (NVGKST), and Gly174 contribute to the GTP site.

It belongs to the TRAFAC class YlqF/YawG GTPase family. MTG1 subfamily. Interacts with ctc. Interacts with the immature 50S ribosome subunit. 2 molecules of rbgA bind to one 50S subunit.

The protein localises to the cytoplasm. Functionally, essential protein that is required for a late step of 50S ribosomal subunit assembly. Has GTPase activity that is stimulated by interaction with the immature 50S ribosome subunit. Binds to the 23S rRNA. Required for the association of ribosomal proteins rplP and rpmA with the large subunit. The chain is Ribosome biogenesis GTPase A from Bacillus cereus (strain ATCC 14579 / DSM 31 / CCUG 7414 / JCM 2152 / NBRC 15305 / NCIMB 9373 / NCTC 2599 / NRRL B-3711).